Here is a 209-residue protein sequence, read N- to C-terminus: Large ribosomal subunit protein uL3 (209 aa).

Gln-150 carries the N5-methylglutamine modification.

This sequence belongs to the universal ribosomal protein uL3 family. As to quaternary structure, part of the 50S ribosomal subunit. Forms a cluster with proteins L14 and L19. Methylated by PrmB.

Functionally, one of the primary rRNA binding proteins, it binds directly near the 3'-end of the 23S rRNA, where it nucleates assembly of the 50S subunit. The protein is Large ribosomal subunit protein uL3 of Vibrio parahaemolyticus serotype O3:K6 (strain RIMD 2210633).